The sequence spans 664 residues: Acid beta-fructofuranosidase 4, vacuolar (664 aa).

The Cytoplasmic portion of the chain corresponds to 1 to 43; the sequence is MASSDALLPISAREEEPLCPYTRLPMADPNQETHGPRRRRPFK. A propeptide spans 1–108 (removed in mature form); sequence MASSDALLPI…WKLSGDRNTP (108 aa). 2 consecutive short sequence motifs (critical for endoplasmic reticulum export) follow at residues 7-8 and 9-10; these read LL and PI. The short motif at 14 to 16 is the Critical for trafficking from the trans-Golgi network to the prevacuolar compartment and from the prevacuolar compartment to the central vacuole element; it reads EEE. The helical; Signal-anchor for type II membrane protein transmembrane segment at 44–64 threads the bilayer; it reads GLLAVSFGLLFIAFYVALIAT. Over 65 to 664 the chain is Lumenal; sequence HDGSRSNDEG…DEAVRALSRT (600 aa). The N-linked (GlcNAc...) asparagine glycan is linked to N113. Substrate-binding positions include 132 to 135, Q151, W159, 194 to 195, and 258 to 259; these read WMND, WT, and RD. D135 is a catalytic residue. An N-linked (GlcNAc...) (complex) asparagine glycan is attached at N280. Substrate is bound by residues E313 and D346. 2 N-linked (GlcNAc...) asparagine glycosylation sites follow: N362 and N498. Cysteines 510 and 558 form a disulfide.

This sequence belongs to the glycosyl hydrolase 32 family. As to quaternary structure, may be present in two forms, a 70 kDa monomer and a heterodimer of the 30 kDa and 38 kDa subunits. The ratio of the levels of the two forms within cells appears to be regulated developmentally. As to expression, mostly expressed in stems, roots and flowers, and, to a lower extent, in mature leaves.

Its subcellular location is the vacuole. The protein localises to the endoplasmic reticulum membrane. It localises to the golgi apparatus membrane. It is found in the golgi apparatus. The protein resides in the trans-Golgi network membrane. Its subcellular location is the prevacuolar compartment membrane. The protein localises to the vacuole membrane. It localises to the vacuole lumen. The catalysed reaction is Hydrolysis of terminal non-reducing beta-D-fructofuranoside residues in beta-D-fructofuranosides.. Its pathway is glycan biosynthesis; sucrose metabolism. Inhibited by C/VIF1 and C/VIF2. Its function is as follows. Possible role in the continued mobilization of sucrose to sink organs. Regulates root elongation. In Arabidopsis thaliana (Mouse-ear cress), this protein is Acid beta-fructofuranosidase 4, vacuolar.